A 483-amino-acid polypeptide reads, in one-letter code: Regulatory protein ViaA (483 aa).

It belongs to the ViaA family. In terms of assembly, homodimer. Interacts with RavA.

It is found in the cytoplasm. In terms of biological role, component of the RavA-ViaA chaperone complex, which may act on the membrane to optimize the function of some of the respiratory chains. ViaA stimulates the ATPase activity of RavA. This chain is Regulatory protein ViaA, found in Salmonella schwarzengrund (strain CVM19633).